A 317-amino-acid chain; its full sequence is Fruit protein pKIWI502 (317 aa).

Residues 1 to 29 are disordered; sequence MSITLSRPSLSRPSLSRHPSLTLHSSLSH. Residues 71–182 enclose the FAD-binding FR-type domain; the sequence is YIWTPVPISR…TQIIGRGFDI (112 aa).

This Actinidia deliciosa (Kiwi) protein is Fruit protein pKIWI502.